The sequence spans 285 residues: MEDRNLERNIGSDISSSSSIDMSQSTNLEISIDQSINRNLEKIDISEDDVRRGEKKIESFENGENNNNNNNNNNNNNNNNNNNNNKNEDRKFKKTLFCIKMYIIQYFKKWLGTGKDKRPPIPDLEEIGWTWLASFTGILVLALIHYREALDAQMQVLIGSFAASAVIIFGVPKSPLAQPRNLIMGHFLSAVVGSVIRVALVYTNANFEVACALAVSLSIMLMQFTNSLHPPGGATALICVMGVEQRWRGFYFIFVPILSGALIMLLTALVVNNFARKRSYPLYWW.

2 disordered regions span residues 1–25 (MEDR…MSQS) and 59–87 (SFEN…NNKN). Low complexity-rich tracts occupy residues 12–25 (SDIS…MSQS) and 65–85 (NNNN…NNNN). Transmembrane regions (helical) follow at residues 124–144 (LEEI…LALI), 152–172 (AQMQ…FGVP), 182–202 (LIMG…ALVY), 205–225 (ANFE…MQFT), and 250–270 (FYFI…TALV).

It is found in the membrane. This Dictyostelium discoideum (Social amoeba) protein is Transmembrane protein DDB_G0269096.